A 1009-amino-acid chain; its full sequence is Type VII secretion system accessory factor EsaA (1009 aa).

Residues 7–27 (IYALIVTLIIIIAIVSMIFFV) traverse the membrane as a helical segment. Positions 680–697 (TFAEEPQEPKIDKGKNDE) are enriched in basic and acidic residues. Positions 680–707 (TFAEEPQEPKIDKGKNDEFNTMSSNLDK) are disordered. The next 5 membrane-spanning stretches (helical) occupy residues 822 to 842 (ISPTLFVLLMYLLSMITAYIF), 869 to 889 (VITSGVIGTTGLVEGLIVGLI), 903 to 923 (KFILMVILTMMVFVLINTYLL), 928 to 948 (SIGMFLMIAALGLYFVAMNNL), and 979 to 999 (IGLVLVILTVLVIIGFVLNMF).

This sequence belongs to the EsaA family. As to quaternary structure, homodimer. Interacts with EssB.

It is found in the cell membrane. In terms of biological role, component of the type VII secretion system (Ess). Provides together with EssB and other components such as EssC and EssE a secretion platform across the cytoplasmic membrane in the host. The chain is Type VII secretion system accessory factor EsaA from Staphylococcus aureus (strain COL).